Reading from the N-terminus, the 95-residue chain is Co-chaperonin GroES (95 aa).

Belongs to the GroES chaperonin family. Heptamer of 7 subunits arranged in a ring. Interacts with the chaperonin GroEL.

Its subcellular location is the cytoplasm. In terms of biological role, together with the chaperonin GroEL, plays an essential role in assisting protein folding. The GroEL-GroES system forms a nano-cage that allows encapsulation of the non-native substrate proteins and provides a physical environment optimized to promote and accelerate protein folding. GroES binds to the apical surface of the GroEL ring, thereby capping the opening of the GroEL channel. In Geobacter metallireducens (strain ATCC 53774 / DSM 7210 / GS-15), this protein is Co-chaperonin GroES.